Reading from the N-terminus, the 591-residue chain is V-type ATP synthase alpha chain (591 aa).

An ATP-binding site is contributed by 233–240 (GPFGAGKT).

The protein belongs to the ATPase alpha/beta chains family.

It catalyses the reaction ATP + H2O + 4 H(+)(in) = ADP + phosphate + 5 H(+)(out). Functionally, produces ATP from ADP in the presence of a proton gradient across the membrane. The V-type alpha chain is a catalytic subunit. The chain is V-type ATP synthase alpha chain from Streptococcus pyogenes serotype M3 (strain ATCC BAA-595 / MGAS315).